Here is a 351-residue protein sequence, read N- to C-terminus: Heat shock factor protein HSF30 (351 aa).

A DNA-binding region spans residues 29-123 (PPPFLSKTYE…LLKTIKRRRN (95 aa)).

It belongs to the HSF family. In terms of assembly, homotrimer. In terms of processing, exhibits temperature-dependent phosphorylation.

It localises to the nucleus. In terms of biological role, DNA-binding protein that specifically binds heat shock promoter elements (HSE) and activates transcription. The sequence is that of Heat shock factor protein HSF30 (HSF30) from Solanum peruvianum (Peruvian tomato).